The chain runs to 154 residues: uncharacterized protein (154 aa).

An N-terminal signal peptide occupies residues 1-19; sequence MWSLKSTLCIALLVTYSVA. 2 consecutive ShKT domains span residues 67–102 and 113–150; these read CADDPNTDCTQYTSLCSNAKYTPLLQQFCPKTCGFC and CVDSSTNCANWEKNGFCSSTFYDCANKKQYCAKTCKLC. 6 disulfides stabilise this stretch: Cys67–Cys102, Cys75–Cys95, Cys82–Cys99, Cys113–Cys150, Cys120–Cys143, and Cys129–Cys147.

This is an uncharacterized protein from Caenorhabditis elegans.